The primary structure comprises 919 residues: MASATAAAARRGLGRALPLFWRGYQTERGVYGYRPRKPESREPQGALERPPVDHGLARLVTVYCEHGHKAAKINPLFTGQALLENVPEIQALVQTLQGPFHTAGLLNMGKEEASLEEVLVYLNQIYCGQISIETSQLQSQDEKDWFAKRFEELQKETFTTEERKHLSKLMLESQEFDHFLATKFSTVKRYGGEGAESMMGFFHELLKMSAYSGITDVIIGMPHRGRLNLLTGLLQFPPELMFRKMRGLSEFPENFSATGDVLSHLTSSVDLYFGAHHPLHVTMLPNPSHLEAVNPVAVGKTRGRQQSRQDGDYSPDNSAQPGDRVICLQVHGDASFCGQGIVPETFTLSNLPHFRIGGSVHLIVNNQLGYTTPAERGRSSLYCSDIGKLVGCAIIHVNGDSPEEVVRATRLAFEYQRQFRKDVIIDLLCYRQWGHNELDEPFYTNPIMYKIIRARKSIPDTYAEHLIAGGLMTQEEVSEIKSSYYAKLNDHLNNMAHYRPPALNLQAHWQGLAQPEAQITTWSTGVPLDLLRFVGMKSVEVPRELQMHSHLLKTHVQSRMEKMMDGIKLDWATAEALALGSLLAQGFNVRLSGQDVGRGTFSQRHAIVVCQETDDTYIPLNHMDPNQKGFLEVSNSPLSEEAVLGFEYGMSIESPKLLPLWEAQFGDFFNGAQIIFDTFISGGEAKWLLQSGIVILLPHGYDGAGPDHSSCRIERFLQMCDSAEEGVDGDTVNMFVVHPTTPAQYFHLLRRQMVRNFRKPLIVASPKMLLRLPAAVSTLQEMAPGTTFNPVIGDSSVDPKKVKTLVFCSGKHFYSLVKQRESLGAKKHDFAIIRVEELCPFPLDSLQQEMSKYKHVKDHIWSQEEPQNMGPWSFVSPRFEKQLACKLRLVGRPPLPVPAVGIGTVHLHQHEDILAKTFA.

Residues Lys183 and Lys188 each carry the N6-succinyllysine modification. A disordered region spans residues 299–320 (GKTRGRQQSRQDGDYSPDNSAQ). N6-succinyllysine is present on residues Lys800 and Lys818.

It belongs to the alpha-ketoglutarate dehydrogenase family. As to quaternary structure, the 2-oxoadipate dehydrogenase complex is composed of OADH (2-oxoadipate dehydrogenase; E1a), DLST (dihydrolipoamide succinyltransferase; E2) and DLD (dihydrolipoamide dehydrogenase; E3). E1a functional unit is a dimer. Interacts with DLST. Thiamine diphosphate is required as a cofactor.

It localises to the mitochondrion. It catalyses the reaction N(6)-[(R)-lipoyl]-L-lysyl-[protein] + 2-oxoadipate + H(+) = N(6)-[(R)-S(8)-glutaryldihydrolipoyl]-L-lysyl-[protein] + CO2. Its pathway is amino-acid degradation. In terms of biological role, 2-oxoadipate dehydrogenase (E1a) component of the 2-oxoadipate dehydrogenase complex (OADHC). Participates in the first step, rate limiting for the overall conversion of 2-oxoadipate (alpha-ketoadipate) to glutaryl-CoA and CO(2) catalyzed by the whole OADHC. Catalyzes the irreversible decarboxylation of 2-oxoadipate via the thiamine diphosphate (ThDP) cofactor and subsequent transfer of the decarboxylated acyl intermediate on an oxidized dihydrolipoyl group that is covalently amidated to the E2 enzyme (dihydrolipoyllysine-residue succinyltransferase or DLST). Can catalyze the decarboxylation of 2-oxoglutarate in vitro, but at a much lower rate than 2-oxoadipate. Responsible for the last step of L-lysine, L-hydroxylysine and L-tryptophan catabolism with the common product being 2-oxoadipate. In Homo sapiens (Human), this protein is 2-oxoadipate dehydrogenase complex component E1 (DHTKD1).